Reading from the N-terminus, the 323-residue chain is Quinolinate synthase (323 aa).

2 residues coordinate iminosuccinate: His-38 and Ser-55. Cys-100 contacts [4Fe-4S] cluster. Iminosuccinate is bound by residues 126 to 128 and Ser-143; that span reads YIN. Cys-186 provides a ligand contact to [4Fe-4S] cluster. Residues 212 to 214 and Thr-229 each bind iminosuccinate; that span reads HPE. Position 279 (Cys-279) interacts with [4Fe-4S] cluster.

It belongs to the quinolinate synthase family. Type 2 subfamily. Requires [4Fe-4S] cluster as cofactor.

The protein localises to the cytoplasm. The catalysed reaction is iminosuccinate + dihydroxyacetone phosphate = quinolinate + phosphate + 2 H2O + H(+). The protein operates within cofactor biosynthesis; NAD(+) biosynthesis; quinolinate from iminoaspartate: step 1/1. In terms of biological role, catalyzes the condensation of iminoaspartate with dihydroxyacetone phosphate to form quinolinate. This chain is Quinolinate synthase, found in Gloeothece citriformis (strain PCC 7424) (Cyanothece sp. (strain PCC 7424)).